A 375-amino-acid chain; its full sequence is Probable peptidoglycan glycosyltransferase FtsW (375 aa).

Over 1–16 the chain is Cytoplasmic; that stretch reads MNLNFKLNLKEIERYD. Residues 17–37 traverse the membrane as a helical segment; the sequence is LVILLMAVALTCFGVVMVYSA. Residues 38-49 are Periplasmic-facing; that stretch reads SSVMATKKFHDG. Residues 50-70 form a helical membrane-spanning segment; that stretch reads FYFLKRQGIYAILGCAAMIVA. The Cytoplasmic portion of the chain corresponds to 71–81; it reads MRIDYRQWREY. The helical transmembrane segment at 82–102 threads the bilayer; sequence AVPILLGCLLLLLLVFIPGIG. At 103 to 145 the chain is on the periplasmic side; sequence GAAKGASRWIRFPGFNLQPSELAKIALIMYMAYSLDKKQEKVK. The helical transmembrane segment at 146-166 threads the bilayer; that stretch reads FFSTGFAPYMVLLAILLAILL. Topologically, residues 167–169 are cytoplasmic; the sequence is KQH. The helical transmembrane segment at 170–190 threads the bilayer; that stretch reads DLGSALTMGGVAILMLFAAGT. Residues 191–193 lie on the Periplasmic side of the membrane; that stretch reads RPR. A helical membrane pass occupies residues 194-214; the sequence is YILGMVVLTLPFLYFLVMNVD. Over 215–233 the chain is Cytoplasmic; the sequence is YRRRRILAYLNPWEDPTNT. A helical transmembrane segment spans residues 234–254; that stretch reads GFQIIQSWLAFGNGGIIGQGL. Residues 255–279 are Periplasmic-facing; sequence GEGKQKMFFLPEAHTDFILSVVGEE. A helical transmembrane segment spans residues 280 to 300; that stretch reads LGLIGVIVIAAMFLMLVLRGV. At 301 to 312 the chain is on the cytoplasmic side; that stretch reads RVALMAQDPFGR. Residues 313–333 traverse the membrane as a helical segment; sequence FLAFGIVTLLGIQAFVNMGVV. Over 334–343 the chain is Periplasmic; the sequence is TGLLPTKGLA. A helical transmembrane segment spans residues 344-364; the sequence is LPFISYGGSSLIVTLFAVGIL. Residues 365-375 are Cytoplasmic-facing; sequence LNVSTRMKGTP.

Belongs to the SEDS family. FtsW subfamily.

The protein resides in the cell inner membrane. The enzyme catalyses [GlcNAc-(1-&gt;4)-Mur2Ac(oyl-L-Ala-gamma-D-Glu-L-Lys-D-Ala-D-Ala)](n)-di-trans,octa-cis-undecaprenyl diphosphate + beta-D-GlcNAc-(1-&gt;4)-Mur2Ac(oyl-L-Ala-gamma-D-Glu-L-Lys-D-Ala-D-Ala)-di-trans,octa-cis-undecaprenyl diphosphate = [GlcNAc-(1-&gt;4)-Mur2Ac(oyl-L-Ala-gamma-D-Glu-L-Lys-D-Ala-D-Ala)](n+1)-di-trans,octa-cis-undecaprenyl diphosphate + di-trans,octa-cis-undecaprenyl diphosphate + H(+). It participates in cell wall biogenesis; peptidoglycan biosynthesis. Its function is as follows. Peptidoglycan polymerase that is essential for cell division. The protein is Probable peptidoglycan glycosyltransferase FtsW of Geobacter metallireducens (strain ATCC 53774 / DSM 7210 / GS-15).